The primary structure comprises 217 residues: 3,4-dihydroxy-2-butanone 4-phosphate synthase (217 aa).

Residues 37–38 (RE), Asp42, 150–154 (RRGHT), and Glu174 contribute to the D-ribulose 5-phosphate site. Residue Glu38 participates in Mg(2+) binding. Mg(2+) is bound at residue His153.

It belongs to the DHBP synthase family. Homodimer. Requires Mg(2+) as cofactor. It depends on Mn(2+) as a cofactor.

The enzyme catalyses D-ribulose 5-phosphate = (2S)-2-hydroxy-3-oxobutyl phosphate + formate + H(+). It participates in cofactor biosynthesis; riboflavin biosynthesis; 2-hydroxy-3-oxobutyl phosphate from D-ribulose 5-phosphate: step 1/1. In terms of biological role, catalyzes the conversion of D-ribulose 5-phosphate to formate and 3,4-dihydroxy-2-butanone 4-phosphate. This chain is 3,4-dihydroxy-2-butanone 4-phosphate synthase, found in Aeromonas salmonicida (strain A449).